The chain runs to 391 residues: Protein-glutamate methylesterase/protein-glutamine glutaminase of group 2 operon (391 aa).

The region spanning 20–138 (RVMIVDDSVV…EPQAADIFKH (119 aa)) is the Response regulatory domain. D71 is subject to 4-aspartylphosphate. Residues 196-383 (PTAPRVLLIG…PLNQIGPKVV (188 aa)) form the CheB-type methylesterase domain. Residues S207, H235, and D331 contribute to the active site.

Belongs to the CheB family. Phosphorylated by CheA. Phosphorylation of the N-terminal regulatory domain activates the methylesterase activity.

The protein localises to the cytoplasm. The catalysed reaction is [protein]-L-glutamate 5-O-methyl ester + H2O = L-glutamyl-[protein] + methanol + H(+). It catalyses the reaction L-glutaminyl-[protein] + H2O = L-glutamyl-[protein] + NH4(+). In terms of biological role, involved in chemotaxis. Part of a chemotaxis signal transduction system that modulates chemotaxis in response to various stimuli. Catalyzes the demethylation of specific methylglutamate residues introduced into the chemoreceptors (methyl-accepting chemotaxis proteins or MCP) by CheR. Also mediates the irreversible deamidation of specific glutamine residues to glutamic acid. This chain is Protein-glutamate methylesterase/protein-glutamine glutaminase of group 2 operon, found in Rhodopseudomonas palustris (strain ATCC BAA-98 / CGA009).